The following is a 217-amino-acid chain: MFVVKTAVLLFFALFIGNTYAYTYSLDRIQALKFSSESSNVDDGPRLHCKGPACSSHSNDLAICQHNQLNVAPHLLKWTCVWPNQSSHVEVIDYNIECKKTVALSMDSITKTCILNYKLEWTYSGVLLHRPWKLFSLKPFTAAFVLLLAASYLATACFRMLGYLGTPRSRFHDNRRWNEQKFMELAVSAVEEQLSNGIQLFSNVKQRVPVPVLDESV.

The first 21 residues, 1 to 21 (MFVVKTAVLLFFALFIGNTYA), serve as a signal peptide directing secretion. Topologically, residues 22 to 133 (YTYSLDRIQA…SGVLLHRPWK (112 aa)) are extracellular. N-linked (GlcNAc...) asparagine glycosylation occurs at asparagine 84. Residues 134–154 (LFSLKPFTAAFVLLLAASYLA) traverse the membrane as a helical segment. Topologically, residues 155 to 217 (TACFRMLGYL…VPVPVLDESV (63 aa)) are cytoplasmic.

The protein resides in the membrane. The chain is Meiotic expression up-regulated protein 29 (meu29) from Schizosaccharomyces pombe (strain 972 / ATCC 24843) (Fission yeast).